Consider the following 278-residue polypeptide: Large ribosomal subunit protein uL2 (278 aa).

Residues 201–278 (HGNINDGKAG…IMRSRHQRKK (78 aa)) are disordered. Residues 210–221 (GRSRWRGKRPHV) show a composition bias toward basic residues.

The protein belongs to the universal ribosomal protein uL2 family. Part of the 50S ribosomal subunit. Forms a bridge to the 30S subunit in the 70S ribosome.

Functionally, one of the primary rRNA binding proteins. Required for association of the 30S and 50S subunits to form the 70S ribosome, for tRNA binding and peptide bond formation. It has been suggested to have peptidyltransferase activity; this is somewhat controversial. Makes several contacts with the 16S rRNA in the 70S ribosome. This is Large ribosomal subunit protein uL2 from Agrobacterium fabrum (strain C58 / ATCC 33970) (Agrobacterium tumefaciens (strain C58)).